A 190-amino-acid chain; its full sequence is Glutathione peroxidase 2 (190 aa).

Sec-40 is an active-site residue. Sec-40 is a non-standard amino acid (selenocysteine).

This sequence belongs to the glutathione peroxidase family. In terms of assembly, homotetramer.

It is found in the cytoplasm. Its subcellular location is the cytosol. It catalyses the reaction 2 glutathione + H2O2 = glutathione disulfide + 2 H2O. It carries out the reaction a hydroperoxy polyunsaturated fatty acid + 2 glutathione = a hydroxy polyunsaturated fatty acid + glutathione disulfide + H2O. The enzyme catalyses tert-butyl hydroperoxide + 2 glutathione = tert-butanol + glutathione disulfide + H2O. The catalysed reaction is cumene hydroperoxide + 2 glutathione = 2-phenylpropan-2-ol + glutathione disulfide + H2O. It catalyses the reaction (13S)-hydroperoxy-(9Z,11E)-octadecadienoate + 2 glutathione = (13S)-hydroxy-(9Z,11E)-octadecadienoate + glutathione disulfide + H2O. It carries out the reaction (5S)-hydroperoxy-(6E,8Z,11Z,14Z)-eicosatetraenoate + 2 glutathione = (5S)-hydroxy-(6E,8Z,11Z,14Z)-eicosatetraenoate + glutathione disulfide + H2O. The enzyme catalyses (12R)-hydroperoxy-(5Z,8Z,10E,14Z)-eicosatetraenoate + 2 glutathione = (12R)-hydroxy-(5Z,8Z,10E,14Z)-eicosatetraenoate + glutathione disulfide + H2O. The catalysed reaction is (15S)-hydroperoxy-(5Z,8Z,11Z,13E)-eicosatetraenoate + 2 glutathione = (15S)-hydroxy-(5Z,8Z,11Z,13E)-eicosatetraenoate + glutathione disulfide + H2O. Its function is as follows. Catalyzes the reduction of hydroperoxides in a glutathione-dependent manner thus regulating cellular redox homeostasis. Can reduce small soluble hydroperoxides such as H2O2, cumene hydroperoxide and tert-butyl hydroperoxide, as well as several fatty acid-derived hydroperoxides. Cannot reduce phosphatidycholine hydroperoxide. The polypeptide is Glutathione peroxidase 2 (Gpx2) (Mus musculus (Mouse)).